Here is a 255-residue protein sequence, read N- to C-terminus: Vitamin B12 import ATP-binding protein BtuD (255 aa).

The region spanning 2-240 (MRVKHIAVGS…AGLAEVFKTQ (239 aa)) is the ABC transporter domain. 30–37 (GPNGSGKS) is an ATP binding site.

It belongs to the ABC transporter superfamily. Vitamin B12 importer (TC 3.A.1.13.1) family. In terms of assembly, the complex is composed of two ATP-binding proteins (BtuD), two transmembrane proteins (BtuC) and a solute-binding protein (BtuF).

Its subcellular location is the cell inner membrane. It catalyses the reaction an R-cob(III)alamin(out) + ATP + H2O = an R-cob(III)alamin(in) + ADP + phosphate + H(+). In terms of biological role, part of the ABC transporter complex BtuCDF involved in vitamin B12 import. Responsible for energy coupling to the transport system. This chain is Vitamin B12 import ATP-binding protein BtuD, found in Vibrio parahaemolyticus serotype O3:K6 (strain RIMD 2210633).